We begin with the raw amino-acid sequence, 570 residues long: Sulfite reductase [NADPH] hemoprotein beta-component (570 aa).

[4Fe-4S] cluster is bound by residues cysteine 434, cysteine 440, cysteine 479, and cysteine 483. Residue cysteine 483 coordinates siroheme.

The protein belongs to the nitrite and sulfite reductase 4Fe-4S domain family. In terms of assembly, alpha(8)-beta(8). The alpha component is a flavoprotein, the beta component is a hemoprotein. Siroheme is required as a cofactor. Requires [4Fe-4S] cluster as cofactor.

It carries out the reaction hydrogen sulfide + 3 NADP(+) + 3 H2O = sulfite + 3 NADPH + 4 H(+). It participates in sulfur metabolism; hydrogen sulfide biosynthesis; hydrogen sulfide from sulfite (NADPH route): step 1/1. Component of the sulfite reductase complex that catalyzes the 6-electron reduction of sulfite to sulfide. This is one of several activities required for the biosynthesis of L-cysteine from sulfate. This is Sulfite reductase [NADPH] hemoprotein beta-component from Escherichia fergusonii (strain ATCC 35469 / DSM 13698 / CCUG 18766 / IAM 14443 / JCM 21226 / LMG 7866 / NBRC 102419 / NCTC 12128 / CDC 0568-73).